The primary structure comprises 64 residues: Large ribosomal subunit protein bL35 (64 aa).

Belongs to the bacterial ribosomal protein bL35 family.

The sequence is that of Large ribosomal subunit protein bL35 from Amoebophilus asiaticus (strain 5a2).